The chain runs to 140 residues: Pro-variola growth factor (140 aa).

The N-terminal stretch at 1-18 is a signal peptide; the sequence is MSMKYLMLLFAAMIIRSF. The Extracellular portion of the chain corresponds to 19–100; sequence ANSGNAIETT…SEKPNTTTSY (82 aa). Asn-34 is a glycosylation site (N-linked (GlcNAc...) asparagine; by host). An EGF-like domain is found at 41-81; sequence AIRLCGPEGDRYCFHGICIHARDIDGMYCRCSHGYTGIRCQ. Intrachain disulfides connect Cys-45–Cys-58, Cys-53–Cys-69, and Cys-71–Cys-80. Asn-95 is a glycosylation site (N-linked (GlcNAc...) asparagine; by host). The chain crosses the membrane as a helical span at residues 101–121; the sequence is IPSPGIVLVLLVSIIVCCLLF. The Cytoplasmic segment spans residues 122–140; that stretch reads VYRFTRRTNKLPLQDMVVP.

The protein belongs to the orthopoxvirus OPG019 family. As to quaternary structure, variola growth factor interacts with host EGFR and promotes EGFR dimerization.

Its subcellular location is the host membrane. The protein resides in the secreted. In terms of biological role, stimulates cellular proliferation (hyperplasia)and mobility around infected cells to promote rapid and efficient spread of infection. This effect is beneficial for virus replication in vivo, because poxviruses replicate possibly better in proliferating cells than in quiescent cells. Acts by binding host EGFR, inducing its dimerization, autophosphorylation and leading to activation of several cellular pathways regulating cell proliferation or cell survival. The activation by host EGFR of mitogen activated protein kinases (MAPK) and extracellular-signal regulated kinases (ERK) are essential for the positive effect of vaccinia growth factor on poxvirus virulence in vivo. This is Pro-variola growth factor (OPG019) from Variola virus (isolate Human/India/Ind3/1967) (VARV).